The sequence spans 456 residues: UDP-N-acetylmuramoylalanine--D-glutamate ligase (456 aa).

ATP is bound at residue 121–127 (GTNGKTT).

This sequence belongs to the MurCDEF family.

It is found in the cytoplasm. The catalysed reaction is UDP-N-acetyl-alpha-D-muramoyl-L-alanine + D-glutamate + ATP = UDP-N-acetyl-alpha-D-muramoyl-L-alanyl-D-glutamate + ADP + phosphate + H(+). It participates in cell wall biogenesis; peptidoglycan biosynthesis. Its function is as follows. Cell wall formation. Catalyzes the addition of glutamate to the nucleotide precursor UDP-N-acetylmuramoyl-L-alanine (UMA). This is UDP-N-acetylmuramoylalanine--D-glutamate ligase from Desulfotalea psychrophila (strain LSv54 / DSM 12343).